Here is a 458-residue protein sequence, read N- to C-terminus: Ribosomal protein uS12 methylthiotransferase RimO (458 aa).

The 111-residue stretch at 6–116 (PKVGFVSLGC…VMEAVHAALP (111 aa)) folds into the MTTase N-terminal domain. 6 residues coordinate [4Fe-4S] cluster: cysteine 15, cysteine 51, cysteine 80, cysteine 147, cysteine 151, and cysteine 154. A Radical SAM core domain is found at 133–371 (LTPRHYAYLK…AKQAQISALR (239 aa)). Residues 373–441 (ESKIGSVQQC…EHDLFGDALP (69 aa)) form the TRAM domain.

It belongs to the methylthiotransferase family. RimO subfamily. [4Fe-4S] cluster serves as cofactor.

The protein localises to the cytoplasm. The enzyme catalyses L-aspartate(89)-[ribosomal protein uS12]-hydrogen + (sulfur carrier)-SH + AH2 + 2 S-adenosyl-L-methionine = 3-methylsulfanyl-L-aspartate(89)-[ribosomal protein uS12]-hydrogen + (sulfur carrier)-H + 5'-deoxyadenosine + L-methionine + A + S-adenosyl-L-homocysteine + 2 H(+). In terms of biological role, catalyzes the methylthiolation of an aspartic acid residue of ribosomal protein uS12. This is Ribosomal protein uS12 methylthiotransferase RimO from Xanthomonas euvesicatoria pv. vesicatoria (strain 85-10) (Xanthomonas campestris pv. vesicatoria).